The primary structure comprises 272 residues: uncharacterized protein (272 aa).

A disordered region spans residues Cys-101–Glu-130. Positions Pro-110–Leu-125 are enriched in low complexity. Ser-142 bears the Phosphoserine mark.

This is an uncharacterized protein from Arabidopsis thaliana (Mouse-ear cress).